We begin with the raw amino-acid sequence, 417 residues long: MLNKAMNIADYDPQLFKAIEDETRRQEEHIELIASENYTSPRVMEAQGSQLTNKYAEGYPGKRYYGGCEYVDVVETLAIERAKELFGATYANVQPHSGSQANSAVYMALLKPGDTVLGMNLAHGGHLTHGSPVNFSGKLYNIIPYGIDEAGKIDYVEMERLAVEHKPKMMIGGFSAFSGIVDWAKMREIADKIGAYLFVDMAHVAGLIAAGVYPNPVPHAHVVTSTTHKTLAGPRGGLILSAADDEDLYKKLNSAVFPGGQGGPLMHVIAGKAVAFKEALEPEFKTYQQQVVKNAKAMVEVFIERGYKIVSGGTDNHLMLVDLIGRDLTGKEADAALGSANITVNKNSVPNDPRSPFVTSGVRIGTPAITRRGFKEAEAKALTTWVCDILDDANNPAVIERVKGEVLALCAKYPVYA.

(6S)-5,6,7,8-tetrahydrofolate is bound by residues Leu121 and 125 to 127; that span reads GHL. At Lys229 the chain carries N6-(pyridoxal phosphate)lysine. 355–357 contributes to the (6S)-5,6,7,8-tetrahydrofolate binding site; it reads SPF.

It belongs to the SHMT family. In terms of assembly, homodimer. Requires pyridoxal 5'-phosphate as cofactor.

The protein localises to the cytoplasm. It carries out the reaction (6R)-5,10-methylene-5,6,7,8-tetrahydrofolate + glycine + H2O = (6S)-5,6,7,8-tetrahydrofolate + L-serine. The protein operates within one-carbon metabolism; tetrahydrofolate interconversion. Its pathway is amino-acid biosynthesis; glycine biosynthesis; glycine from L-serine: step 1/1. In terms of biological role, catalyzes the reversible interconversion of serine and glycine with tetrahydrofolate (THF) serving as the one-carbon carrier. This reaction serves as the major source of one-carbon groups required for the biosynthesis of purines, thymidylate, methionine, and other important biomolecules. Also exhibits THF-independent aldolase activity toward beta-hydroxyamino acids, producing glycine and aldehydes, via a retro-aldol mechanism. In Shewanella denitrificans (strain OS217 / ATCC BAA-1090 / DSM 15013), this protein is Serine hydroxymethyltransferase.